Reading from the N-terminus, the 303-residue chain is Probable 5-dehydro-4-deoxyglucarate dehydratase (303 aa).

Belongs to the DapA family.

It carries out the reaction 5-dehydro-4-deoxy-D-glucarate + H(+) = 2,5-dioxopentanoate + CO2 + H2O. It participates in carbohydrate acid metabolism; D-glucarate degradation; 2,5-dioxopentanoate from D-glucarate: step 2/2. This is Probable 5-dehydro-4-deoxyglucarate dehydratase from Acinetobacter baumannii (strain ATCC 17978 / DSM 105126 / CIP 53.77 / LMG 1025 / NCDC KC755 / 5377).